The sequence spans 180 residues: Major urinary protein 6 (180 aa).

A signal peptide spans 1–18 (MKMLLLLCLGLTLVCVHA). Residues Cys-82 and Cys-175 are joined by a disulfide bond.

This sequence belongs to the calycin superfamily. Lipocalin family. As to expression, abundant in the urine of adult male mice but absent from that of females.

The protein localises to the secreted. Functionally, binds pheromones that are released from drying urine of males. These pheromones affect the sexual behavior of females. The protein is Major urinary protein 6 (Mup6) of Mus musculus (Mouse).